Consider the following 504-residue polypeptide: MKKTEMGRFNISPDEDSSSYSSNSDFNYSYPTKQAALKSHYADVDPENQNFLLESNLGKKKYETDFHPGTTSFGMSVFNLSNAIVGSGILGLSYAMANTGIALFIILLTFVSIFSLYSVHLLLKTANEGGSLLYEQLGHKAYGLAGKLAASGSITMQNIGAMSSYLFIVKYELPLVIKALMNIEDTNGLWYLNGDYLVLLVSLVLILPLSLLRNLGYLGYTSGLSLLCMIFFLIVVICKKFQIPCPVEAALVANETVNGTFTQAALALAFNSTADDACRPRYFIFNSQTVYAVPILTFSFVCHPAVLPIYEELKSRSRRRMMNVSKISFFAMFLMYLLAALFGYLTFYGHVESELLHTYSEIVGTDILLLVVRLAVLVAVTLTVPVVIFPIRSSVTHLLCPTKEFSWLRHSIITVTILSFTNLLVIFVPTIRDIFGFIGASAAAMLIFILPSAFYIKLVKKEPMRSVQKIGALCFLLSGIVVMIGSMGLIVLDWVHDASAAGGH.

The interval 1–23 (MKKTEMGRFNISPDEDSSSYSSN) is disordered. Residues 1–76 (MKKTEMGRFN…HPGTTSFGMS (76 aa)) lie on the Cytoplasmic side of the membrane. The tract at residues 1–96 (MKKTEMGRFN…SGILGLSYAM (96 aa)) is regulates protein turnover upon amino acid deprivation. 4 positions are modified to phosphoserine: serine 12, serine 21, serine 22, and serine 55. The chain crosses the membrane as a helical span at residues 77 to 96 (VFNLSNAIVGSGILGLSYAM). Na(+) is bound at residue asparagine 82. The Extracellular portion of the chain corresponds to 97 to 102 (ANTGIA). Residues 103–123 (LFIILLTFVSIFSLYSVHLLL) traverse the membrane as a helical segment. Over 124–158 (KTANEGGSLLYEQLGHKAYGLAGKLAASGSITMQN) the chain is Cytoplasmic. A helical membrane pass occupies residues 159 to 177 (IGAMSSYLFIVKYELPLVI). The Extracellular segment spans residues 178-188 (KALMNIEDTNG). A helical transmembrane segment spans residues 189 to 209 (LWYLNGDYLVLLVSLVLILPL). The Cytoplasmic portion of the chain corresponds to 210 to 217 (SLLRNLGY). Residues 218-238 (LGYTSGLSLLCMIFFLIVVIC) traverse the membrane as a helical segment. Residues 239-289 (KKFQIPCPVEAALVANETVNGTFTQAALALAFNSTADDACRPRYFIFNSQT) lie on the Extracellular side of the membrane. Cysteine 245 and cysteine 278 are joined by a disulfide. N-linked (GlcNAc...) asparagine glycosylation is found at asparagine 254 and asparagine 258. Residues 290–310 (VYAVPILTFSFVCHPAVLPIY) traverse the membrane as a helical segment. The Cytoplasmic portion of the chain corresponds to 311-326 (EELKSRSRRRMMNVSK). Residues 327–347 (ISFFAMFLMYLLAALFGYLTF) traverse the membrane as a helical segment. At 348–368 (YGHVESELLHTYSEIVGTDIL) the chain is on the extracellular side. Residues 369 to 389 (LLVVRLAVLVAVTLTVPVVIF) traverse the membrane as a helical segment. Na(+) is bound at residue threonine 383. The Cytoplasmic portion of the chain corresponds to 390–410 (PIRSSVTHLLCPTKEFSWLRH). Residues 411 to 431 (SIITVTILSFTNLLVIFVPTI) form a helical membrane-spanning segment. Topologically, residues 432–433 (RD) are extracellular. A helical membrane pass occupies residues 434-454 (IFGFIGASAAAMLIFILPSAF). Topologically, residues 455–469 (YIKLVKKEPMRSVQK) are cytoplasmic. A helical membrane pass occupies residues 470–492 (IGALCFLLSGIVVMIGSMGLIVL). At 493–504 (DWVHDASAAGGH) the chain is on the extracellular side.

It belongs to the amino acid/polyamine transporter 2 family. Polyubiquitination by NEDD4L regulates the degradation and the activity of SLC38A2. As to expression, expressed in cerebral and cerebellar astrocytes and neurons.

It is found in the cell membrane. It catalyses the reaction L-alanine(in) + Na(+)(in) = L-alanine(out) + Na(+)(out). The catalysed reaction is glycine(in) + Na(+)(in) = glycine(out) + Na(+)(out). It carries out the reaction L-serine(in) + Na(+)(in) = L-serine(out) + Na(+)(out). The enzyme catalyses L-proline(in) + Na(+)(in) = L-proline(out) + Na(+)(out). It catalyses the reaction L-methionine(in) + Na(+)(in) = L-methionine(out) + Na(+)(out). The catalysed reaction is L-histidine(in) + Na(+)(in) = L-histidine(out) + Na(+)(out). It carries out the reaction L-asparagine(in) + Na(+)(in) = L-asparagine(out) + Na(+)(out). The enzyme catalyses L-glutamine(in) + Na(+)(in) = L-glutamine(out) + Na(+)(out). It catalyses the reaction L-threonine(in) + Na(+)(in) = L-threonine(out) + Na(+)(out). The catalysed reaction is L-leucine(in) + Na(+)(in) = L-leucine(out) + Na(+)(out). It carries out the reaction L-phenylalanine(in) + Na(+)(in) = L-phenylalanine(out) + Na(+)(out). Inhibited by N-methyl-D-glucamine. Inhibited by choline. Allosteric regulation of sodium ions binding by pH. Its function is as follows. Symporter that cotransports neutral amino acids and sodium ions from the extracellular to the intracellular side of the cell membrane. The transport is pH-sensitive, Li(+)-intolerant, electrogenic, driven by the Na(+) electrochemical gradient and cotransports of neutral amino acids and sodium ions with a stoichiometry of 1:1. May function in the transport of amino acids at the blood-brain barrier. May function in the transport of amino acids in the supply of maternal nutrients to the fetus through the placenta. Maintains a key metabolic glutamine/glutamate balance underpinning retrograde signaling by dendritic release of the neurotransmitter glutamate. Transports L-proline in differentiating osteoblasts for the efficient synthesis of proline-enriched proteins and provides proline essential for osteoblast differentiation and bone formation during bone development. The protein is Sodium-coupled neutral amino acid symporter 2 of Mus musculus (Mouse).